The primary structure comprises 533 residues: Retinoid isomerohydrolase (533 aa).

Residue Ser-2 is modified to N-acetylserine. 2 positions are modified to phosphothreonine: Thr-101 and Thr-105. A lipid anchor (S-palmitoyl cysteine; in membrane form) is attached at Cys-112. Lys-113 bears the N6-acetyllysine mark. The residue at position 117 (Ser-117) is a Phosphoserine. Residue His-180 coordinates Fe cation. Residue Cys-231 is the site of S-palmitoyl cysteine; in membrane form attachment. Residues His-241 and His-313 each coordinate Fe cation. Residues Cys-329 and Cys-330 are each lipidated (S-palmitoyl cysteine; in membrane form). His-527 is a binding site for Fe cation.

This sequence belongs to the carotenoid oxygenase family. As to quaternary structure, interacts with MYO7A; this mediates light-dependent intracellular transport of RPE65. Fe(2+) serves as cofactor. Post-translationally, palmitoylation by LRAT regulates ligand binding specificity; the palmitoylated form (membrane form) specifically binds all-trans-retinyl-palmitate, while the soluble unpalmitoylated form binds all-trans-retinol (vitamin A). Retinal pigment epithelium specific.

The protein localises to the cytoplasm. The protein resides in the cell membrane. It is found in the microsome membrane. The enzyme catalyses an all-trans-retinyl ester + H2O = 11-cis-retinol + a fatty acid + H(+). It carries out the reaction lutein = (3R,3'S)-zeaxanthin. The catalysed reaction is all-trans-retinyl hexadecanoate + H2O = 11-cis-retinol + hexadecanoate + H(+). Functionally, critical isomerohydrolase in the retinoid cycle involved in regeneration of 11-cis-retinal, the chromophore of rod and cone opsins. Catalyzes the cleavage and isomerization of all-trans-retinyl fatty acid esters to 11-cis-retinol which is further oxidized by 11-cis retinol dehydrogenase to 11-cis-retinal for use as visual chromophore. Essential for the production of 11-cis retinal for both rod and cone photoreceptors. Also capable of catalyzing the isomerization of lutein to meso-zeaxanthin an eye-specific carotenoid. The soluble form binds vitamin A (all-trans-retinol), making it available for LRAT processing to all-trans-retinyl ester. The membrane form, palmitoylated by LRAT, binds all-trans-retinyl esters, making them available for IMH (isomerohydrolase) processing to all-cis-retinol. The soluble form is regenerated by transferring its palmitoyl groups onto 11-cis-retinol, a reaction catalyzed by LRAT. The protein is Retinoid isomerohydrolase (RPE65) of Chlorocebus aethiops (Green monkey).